Reading from the N-terminus, the 163-residue chain is MNLFSMPLGQMLALSEGEGGLFDFNATLPLMALQFILLTVILTFVFYKPIGNLLEEREAYINGNLSDASAKLLQADELCKQYEEQLKDAKADAQSCIADAETEAKQVVALELAQARKDAASLVEQVNKELEAQKELALKQLEAQIDELSQLIKEKLLGKQAIL.

The chain crosses the membrane as a helical span at residues Ala-26–Phe-46.

This sequence belongs to the ATPase B chain family. As to quaternary structure, F-type ATPases have 2 components, F(1) - the catalytic core - and F(0) - the membrane proton channel. F(1) has five subunits: alpha(3), beta(3), gamma(1), delta(1), epsilon(1). F(0) has four main subunits: a(1), b(1), b'(1) and c(10-14). The alpha and beta chains form an alternating ring which encloses part of the gamma chain. F(1) is attached to F(0) by a central stalk formed by the gamma and epsilon chains, while a peripheral stalk is formed by the delta, b and b' chains.

The protein localises to the plastid. The protein resides in the chloroplast thylakoid membrane. Functionally, f(1)F(0) ATP synthase produces ATP from ADP in the presence of a proton or sodium gradient. F-type ATPases consist of two structural domains, F(1) containing the extramembraneous catalytic core and F(0) containing the membrane proton channel, linked together by a central stalk and a peripheral stalk. During catalysis, ATP synthesis in the catalytic domain of F(1) is coupled via a rotary mechanism of the central stalk subunits to proton translocation. Component of the F(0) channel, it forms part of the peripheral stalk, linking F(1) to F(0). The b'-subunit is a diverged and duplicated form of b found in plants and photosynthetic bacteria. The sequence is that of ATP synthase subunit b', chloroplastic from Ochrosphaera neapolitana.